The sequence spans 1199 residues: DNA-directed RNA polymerase subunit beta (1199 aa).

The disordered stretch occupies residues 1175 to 1199; it reads EEKKAHEAAAQATDGKSANSTDDKK. Over residues 1188–1199 the composition is skewed to polar residues; that stretch reads DGKSANSTDDKK.

The protein belongs to the RNA polymerase beta chain family. As to quaternary structure, the RNAP catalytic core consists of 2 alpha, 1 beta, 1 beta' and 1 omega subunit. When a sigma factor is associated with the core the holoenzyme is formed, which can initiate transcription.

It catalyses the reaction RNA(n) + a ribonucleoside 5'-triphosphate = RNA(n+1) + diphosphate. In terms of biological role, DNA-dependent RNA polymerase catalyzes the transcription of DNA into RNA using the four ribonucleoside triphosphates as substrates. The sequence is that of DNA-directed RNA polymerase subunit beta from Lacticaseibacillus casei (strain BL23) (Lactobacillus casei).